The following is a 306-amino-acid chain: uncharacterized protein (306 aa).

10 consecutive transmembrane segments (helical) span residues 6 to 26 (LLGF…PIAL), 35 to 55 (AQTI…ALLA), 69 to 89 (YAWI…LFSS), 98 to 118 (VAQI…VLIF), 122 to 142 (LGLH…LFFN), 154 to 174 (YSTG…YGMA), 186 to 206 (QILL…ADFS), 211 to 231 (LTPL…IGYG), 247 to 267 (VVIT…HYFS), and 281 to 301 (YIGA…HKLL). EamA domains follow at residues 17-142 (MAWG…LFFN) and 166-296 (LIWV…LSAI).

The protein belongs to the EamA transporter family.

The protein resides in the cell membrane. This is an uncharacterized protein from Haemophilus influenzae (strain ATCC 51907 / DSM 11121 / KW20 / Rd).